The primary structure comprises 467 residues: GTPase Der (467 aa).

EngA-type G domains follow at residues 25–188 and 199–372; these read PVVA…PEAP and RRVA…ASWE. GTP is bound by residues 31-38, 78-82, 140-143, 205-212, 252-256, and 317-320; these read GRPNVGKS, DTGGW, NKAD, DTAGL, and NKWD. In terms of domain architecture, KH-like spans 373–455; the sequence is TRVPTAQLNA…PIEIAVRPRK (83 aa).

Belongs to the TRAFAC class TrmE-Era-EngA-EngB-Septin-like GTPase superfamily. EngA (Der) GTPase family. As to quaternary structure, associates with the 50S ribosomal subunit.

Functionally, GTPase that plays an essential role in the late steps of ribosome biogenesis. In Salinispora arenicola (strain CNS-205), this protein is GTPase Der.